A 301-amino-acid chain; its full sequence is 4-hydroxy-tetrahydrodipicolinate synthase (301 aa).

A pyruvate-binding site is contributed by Thr53. The active-site Proton donor/acceptor is the Tyr142. The active-site Schiff-base intermediate with substrate is the Lys170. Val212 lines the pyruvate pocket.

This sequence belongs to the DapA family. Homotetramer; dimer of dimers.

Its subcellular location is the cytoplasm. The enzyme catalyses L-aspartate 4-semialdehyde + pyruvate = (2S,4S)-4-hydroxy-2,3,4,5-tetrahydrodipicolinate + H2O + H(+). It participates in amino-acid biosynthesis; L-lysine biosynthesis via DAP pathway; (S)-tetrahydrodipicolinate from L-aspartate: step 3/4. Functionally, catalyzes the condensation of (S)-aspartate-beta-semialdehyde [(S)-ASA] and pyruvate to 4-hydroxy-tetrahydrodipicolinate (HTPA). The protein is 4-hydroxy-tetrahydrodipicolinate synthase of Synechocystis sp. (strain ATCC 27184 / PCC 6803 / Kazusa).